Reading from the N-terminus, the 126-residue chain is Desulfoferrodoxin (126 aa).

Fe cation is bound by residues cysteine 10, cysteine 13, cysteine 29, cysteine 30, histidine 49, histidine 69, histidine 75, cysteine 116, and histidine 119.

This sequence belongs to the desulfoferrodoxin family. As to quaternary structure, homodimer. Fe(3+) serves as cofactor. It depends on Cu(2+) as a cofactor.

The catalysed reaction is reduced [rubredoxin] + superoxide + 2 H(+) = oxidized [rubredoxin] + H2O2. Functionally, catalyzes the one-electron reduction of superoxide anion radical to hydrogen peroxide at a nonheme ferrous iron center. Plays a fundamental role in case of oxidative stress via its superoxide detoxification activity. This Syntrophotalea carbinolica (strain DSM 2380 / NBRC 103641 / GraBd1) (Pelobacter carbinolicus) protein is Desulfoferrodoxin (dfx).